Reading from the N-terminus, the 343-residue chain is MEWVEIDGSYGEGGGQILRTSVALSVITGKPVRIYNIRANRPNPGLRPQHLHGILALKELSNAKIKGASVGSTELEFIPGKAEPKHVRVPIKTAGSITLVLQALLPAMAFIGGSFEITGGTDVPWSPPVDYLKHVTLYALEKMGIKVELEIKRRGHYPRGGGLVVGRIEPWEEKKPLKALKWERIEWFAGISHATNLPAHVAERQAKAARERLSEVYSAPVEIETEVSRSLGPGSGIVVWAETDKLRLGGDALGKRGKPAEVVGREAADELIEALKTGMAADRFLGDQLIPFLAFAGGEVGVSEITNHLVTNVWVVEKFFGNVFEVEGEVGKPGTLRVVKSVL.

ATP-binding positions include Gln-102 and 284–288 (FLGDQ). His-308 acts as the Tele-AMP-histidine intermediate in catalysis.

The protein belongs to the RNA 3'-terminal cyclase family. Type 1 subfamily.

It is found in the cytoplasm. It carries out the reaction a 3'-end 3'-phospho-ribonucleotide-RNA + ATP = a 3'-end 2',3'-cyclophospho-ribonucleotide-RNA + AMP + diphosphate. Its function is as follows. Catalyzes the conversion of 3'-phosphate to a 2',3'-cyclic phosphodiester at the end of RNA. The mechanism of action of the enzyme occurs in 3 steps: (A) adenylation of the enzyme by ATP; (B) transfer of adenylate to an RNA-N3'P to produce RNA-N3'PP5'A; (C) and attack of the adjacent 2'-hydroxyl on the 3'-phosphorus in the diester linkage to produce the cyclic end product. The biological role of this enzyme is unknown but it is likely to function in some aspects of cellular RNA processing. The sequence is that of RNA 3'-terminal phosphate cyclase (rtcA) from Thermococcus kodakarensis (strain ATCC BAA-918 / JCM 12380 / KOD1) (Pyrococcus kodakaraensis (strain KOD1)).